Consider the following 595-residue polypeptide: P2X purinoceptor 7 (595 aa).

Residues 1-22 are Cytoplasmic-facing; sequence MPACCSCSDVFQYETNKVTRIQ. Residue cysteine 4 is the site of S-palmitoyl cysteine attachment. Residues 23–46 form a helical membrane-spanning segment; sequence SMNYGTIKWFFHVIIFSYVCFALV. Residues 47–328 lie on the Extracellular side of the membrane; that stretch reads SDKLYQRKEP…ILVFGTGGKF (282 aa). 3 disulfides stabilise this stretch: cysteine 119/cysteine 168, cysteine 129/cysteine 152, and cysteine 135/cysteine 162. 2 positions are modified to ADP-ribosylarginine: arginine 125 and arginine 133. A glycan (N-linked (GlcNAc...) asparagine) is linked at asparagine 187. Threonine 189 is an ATP binding site. N-linked (GlcNAc...) asparagine glycans are attached at residues asparagine 202 and asparagine 213. Cysteine 216 and cysteine 226 are oxidised to a cystine. Asparagine 241 carries an N-linked (GlcNAc...) asparagine glycan. A disulfide bridge connects residues cysteine 260 and cysteine 269. The N-linked (GlcNAc...) asparagine glycan is linked to asparagine 284. ATP is bound by residues arginine 294 and lysine 311. Residues 329–353 traverse the membrane as a helical segment; the sequence is DIIQLVVYIGSTLSYFGLAAVFIDF. Position 342 (serine 342) interacts with Na(+). At tyrosine 343 the chain carries Phosphotyrosine. Residues 354 to 595 lie on the Cytoplasmic side of the membrane; the sequence is LIDTYSSNCC…GQYSGFKSPY (242 aa). The interval 360 to 377 is C-cys anchor; that stretch reads SNCCRSHIYPWCKCCQPC. Residues cysteine 362, cysteine 363, cysteine 374, and cysteine 377 are each lipidated (S-palmitoyl cysteine). Position 390 is a phosphoserine (serine 390). Residues 395–595 are cytoplasmic ballast; the sequence is KPTLKYVSFV…GQYSGFKSPY (201 aa). Cysteine 479, cysteine 499, and cysteine 506 together coordinate Zn(2+). GTP contacts are provided by arginine 546, histidine 547, tyrosine 550, and alanine 567. Residue cysteine 572 participates in Zn(2+) binding. GTP-binding residues include lysine 583, serine 589, and glycine 590.

It belongs to the P2X receptor family. In terms of assembly, homotrimers. Interacts with LAMA3, ITGB2, ACTB, ACTN4, SVIL, MPP3, HSPA1, HSPCB, HSPA8, PIK230 and PTPRB. Interacts (via C-terminus) with EMP2. Interacts with isoform B; this interaction potentiates P2RX7 responses. Post-translationally, phosphorylation results in its inactivation. In terms of processing, ADP-ribosylation at Arg-125 is necessary and sufficient to activate P2RX7 and gate the channel. Palmitoylation of several cysteines in the C-terminal cytoplasmic tail is required for efficient localization to cell surface. Palmitoylation prevents channel desensitization by physically anchoring the palmitoylated groups to the membrane. As to expression, widely expressed with highest levels in brain and immune tissues. In terms of tissue distribution, predominant form in many tissues.

Its subcellular location is the cell membrane. The enzyme catalyses Ca(2+)(in) = Ca(2+)(out). The catalysed reaction is K(+)(in) = K(+)(out). It carries out the reaction Na(+)(in) = Na(+)(out). Its activity is regulated as follows. Activated by high extracellular ATP levels (0.1-2.5 mM). The synthetic analog 2'(3')-O-(4-benzoylbenzoyl)ATP (BzATP) acts as a potent agonist. Does not undergo desensitization, instead, undergoes a facilitation process where currents progressively increase with repetitive or prolonged agonist application. Palmitoylation prevents channel desensitization. The permeability of the P2RX7 channel is modulated by the amount of cholesterol in the plasma membrane. ATP-gated nonselective transmembrane cation channel that requires high millimolar concentrations of ATP for activation. Upon ATP binding, it rapidly opens to allow the influx of small cations Na(+) and Ca(2+), and the K(+) efflux. Also has the ability to form a large pore in the cell membrane, allowing the passage of large cationic molecules. In microglia, may mediate NADPH transport across the plasma membrane. In immune cells, P2RX7 acts as a molecular sensor in pathological inflammatory states by detecting and responding to high local concentrations of extracellar ATP. In microglial cells, P2RX7 activation leads to the release of pro-inflammatory cytokines, such as IL-1beta and IL-18, through the activation of the NLRP3 inflammasome and caspase-1. Cooperates with KCNK6 to activate NLRP3 inflammasome. Activates death pathways leading to apoptosis and autophagy. Activates death pathways leading to pyroptosis. In terms of biological role, shows ion channel activity but no macropore function. Its function is as follows. Non-functional channel. In Homo sapiens (Human), this protein is P2X purinoceptor 7 (P2RX7).